The primary structure comprises 354 residues: DNA ligase C2 (354 aa).

The active-site N6-AMP-lysine intermediate is the K29.

Belongs to the ATP-dependent DNA ligase family.

The enzyme catalyses ATP + (deoxyribonucleotide)n-3'-hydroxyl + 5'-phospho-(deoxyribonucleotide)m = (deoxyribonucleotide)n+m + AMP + diphosphate.. Its function is as follows. DNA ligase that seals nicks in double-stranded DNA during DNA replication, DNA recombination and DNA repair. Has weak intrinsic nick joining activities and accumulates DNA-adenylate. Acts as a backup for LigD in the Ku-LigD-dependent NHEJ pathway. This Mycolicibacterium smegmatis (strain ATCC 700084 / mc(2)155) (Mycobacterium smegmatis) protein is DNA ligase C2 (ligC2).